Reading from the N-terminus, the 218-residue chain is Protein-L-isoaspartate O-methyltransferase (218 aa).

The active site involves Ser-69.

It belongs to the methyltransferase superfamily. L-isoaspartyl/D-aspartyl protein methyltransferase family.

The protein localises to the cytoplasm. It catalyses the reaction [protein]-L-isoaspartate + S-adenosyl-L-methionine = [protein]-L-isoaspartate alpha-methyl ester + S-adenosyl-L-homocysteine. In terms of biological role, catalyzes the methyl esterification of L-isoaspartyl residues in peptides and proteins that result from spontaneous decomposition of normal L-aspartyl and L-asparaginyl residues. It plays a role in the repair and/or degradation of damaged proteins. The chain is Protein-L-isoaspartate O-methyltransferase from Aromatoleum aromaticum (strain DSM 19018 / LMG 30748 / EbN1) (Azoarcus sp. (strain EbN1)).